A 293-amino-acid polypeptide reads, in one-letter code: Probable 2-(5''-triphosphoribosyl)-3'-dephosphocoenzyme-A synthase (293 aa).

It belongs to the CitG/MdcB family.

It catalyses the reaction 3'-dephospho-CoA + ATP = 2'-(5''-triphospho-alpha-D-ribosyl)-3'-dephospho-CoA + adenine. Its function is as follows. Involved in the formation of 2-(5''-phosphoribosyl)-3'-dephosphocoenzyme-A, the prosthetic group of the acyl-carrier protein of the malonate decarboxylase. The sequence is that of Probable 2-(5''-triphosphoribosyl)-3'-dephosphocoenzyme-A synthase from Pseudomonas aeruginosa (strain ATCC 15692 / DSM 22644 / CIP 104116 / JCM 14847 / LMG 12228 / 1C / PRS 101 / PAO1).